Consider the following 250-residue polypeptide: Bacteriorhodopsin (250 aa).

At 1–18 (MCCAALAPPMAATVGPES) the chain is on the extracellular side. A helical transmembrane segment spans residues 19–37 (IWLWIGTIGMTLGTLYFVG). Topologically, residues 38 to 51 (RGRGVRDRKMQEFY) are cytoplasmic. The helical transmembrane segment at 52–70 (IITIFITTIAAAMYFAMAT) threads the bilayer. Over 71 to 86 (GFGVTEVMVGDEALTI) the chain is Extracellular. A helical membrane pass occupies residues 87–104 (YWARYADWLFTTPLLLLD). Residues 105-115 (LSLLAGANRNT) lie on the Cytoplasmic side of the membrane. Residues 116–135 (IATLIGLDVFMIGTGAIAAL) traverse the membrane as a helical segment. Residues 136 to 142 (SSTPGTR) are Extracellular-facing. The helical transmembrane segment at 143–162 (IAWWAISTGALLALLYVLVG) threads the bilayer. The Cytoplasmic portion of the chain corresponds to 163 to 180 (TLSENARNRAPEVASLFG). Residues 181–199 (RLRNLVIALWFLYPVVWIL) traverse the membrane as a helical segment. At 200 to 212 (GTEGTFGILPLYW) the chain is on the extracellular side. A helical membrane pass occupies residues 213–232 (ETAAFMVLDLSAKVGFGVIL). K225 carries the post-translational modification N6-(retinylidene)lysine. The Cytoplasmic portion of the chain corresponds to 233–250 (LQSRSVLERVATPTAAPT).

The protein belongs to the archaeal/bacterial/fungal opsin family.

The protein localises to the cell membrane. In terms of biological role, light-driven proton pump. The polypeptide is Bacteriorhodopsin (bop) (Haloterrigena sp. (strain arg-4)).